The chain runs to 375 residues: Queuine tRNA-ribosyltransferase (375 aa).

D89 acts as the Proton acceptor in catalysis. Substrate contacts are provided by residues 89–93 (DSGGF), D143, Q187, and G214. Residues 245–251 (GVGKPED) form an RNA binding region. D264 functions as the Nucleophile in the catalytic mechanism. The tract at residues 269 to 273 (TRNAR) is RNA binding; important for wobble base 34 recognition. The Zn(2+) site is built by C302, C304, C307, and H333.

Belongs to the queuine tRNA-ribosyltransferase family. In terms of assembly, homodimer. Within each dimer, one monomer is responsible for RNA recognition and catalysis, while the other monomer binds to the replacement base PreQ1. The cofactor is Zn(2+).

The catalysed reaction is 7-aminomethyl-7-carbaguanine + guanosine(34) in tRNA = 7-aminomethyl-7-carbaguanosine(34) in tRNA + guanine. It participates in tRNA modification; tRNA-queuosine biosynthesis. Functionally, catalyzes the base-exchange of a guanine (G) residue with the queuine precursor 7-aminomethyl-7-deazaguanine (PreQ1) at position 34 (anticodon wobble position) in tRNAs with GU(N) anticodons (tRNA-Asp, -Asn, -His and -Tyr). Catalysis occurs through a double-displacement mechanism. The nucleophile active site attacks the C1' of nucleotide 34 to detach the guanine base from the RNA, forming a covalent enzyme-RNA intermediate. The proton acceptor active site deprotonates the incoming PreQ1, allowing a nucleophilic attack on the C1' of the ribose to form the product. After dissociation, two additional enzymatic reactions on the tRNA convert PreQ1 to queuine (Q), resulting in the hypermodified nucleoside queuosine (7-(((4,5-cis-dihydroxy-2-cyclopenten-1-yl)amino)methyl)-7-deazaguanosine). The polypeptide is Queuine tRNA-ribosyltransferase (Salmonella typhi).